We begin with the raw amino-acid sequence, 337 residues long: 1-aminocyclopropane-1-carboxylate deaminase (337 aa).

Lys-50 is subject to N6-(pyridoxal phosphate)lysine. The Nucleophile role is filled by Ser-77.

It belongs to the ACC deaminase/D-cysteine desulfhydrase family. Homotrimer. Pyridoxal 5'-phosphate serves as cofactor.

The enzyme catalyses 1-aminocyclopropane-1-carboxylate + H2O = 2-oxobutanoate + NH4(+). Functionally, catalyzes a cyclopropane ring-opening reaction, the irreversible conversion of 1-aminocyclopropane-1-carboxylate (ACC) to ammonia and alpha-ketobutyrate. Allows growth on ACC as a nitrogen source. In Methylobacterium sp. (strain 4-46), this protein is 1-aminocyclopropane-1-carboxylate deaminase.